Reading from the N-terminus, the 905-residue chain is Isoleucine--tRNA ligase (905 aa).

The 'HIGH' region motif lies at 56 to 66 (PYANGNIHMGT). Position 563 (glutamate 563) interacts with L-isoleucyl-5'-AMP. A 'KMSKS' region motif is present at residues 604–608 (KMSKS). Lysine 607 is an ATP binding site.

It belongs to the class-I aminoacyl-tRNA synthetase family. IleS type 1 subfamily. Monomer.

It is found in the cytoplasm. It carries out the reaction tRNA(Ile) + L-isoleucine + ATP = L-isoleucyl-tRNA(Ile) + AMP + diphosphate. Functionally, catalyzes the attachment of isoleucine to tRNA(Ile). As IleRS can inadvertently accommodate and process structurally similar amino acids such as valine, to avoid such errors it has two additional distinct tRNA(Ile)-dependent editing activities. One activity is designated as 'pretransfer' editing and involves the hydrolysis of activated Val-AMP. The other activity is designated 'posttransfer' editing and involves deacylation of mischarged Val-tRNA(Ile). This is Isoleucine--tRNA ligase from Pelagibacter ubique (strain HTCC1062).